The chain runs to 903 residues: Protein translocase subunit SecA (903 aa).

ATP-binding positions include Gln89, 107–111, and Asp502; that span reads GEGKT. Zn(2+) contacts are provided by Cys886, Cys888, Cys897, and His898.

This sequence belongs to the SecA family. Monomer and homodimer. Part of the essential Sec protein translocation apparatus which comprises SecA, SecYEG and auxiliary proteins SecDF-YajC and YidC. Zn(2+) serves as cofactor.

Its subcellular location is the cell inner membrane. It localises to the cytoplasm. It carries out the reaction ATP + H2O + cellular proteinSide 1 = ADP + phosphate + cellular proteinSide 2.. Its function is as follows. Part of the Sec protein translocase complex. Interacts with the SecYEG preprotein conducting channel. Has a central role in coupling the hydrolysis of ATP to the transfer of proteins into and across the cell membrane, serving both as a receptor for the preprotein-SecB complex and as an ATP-driven molecular motor driving the stepwise translocation of polypeptide chains across the membrane. This is Protein translocase subunit SecA from Sinorhizobium medicae (strain WSM419) (Ensifer medicae).